Here is a 258-residue protein sequence, read N- to C-terminus: Acetylglutamate kinase (258 aa).

Residues Gly-44–Gly-45, Arg-66, and Asn-158 each bind substrate. ATP-binding positions include Asp-181–Leu-186 and Ile-209–Thr-211.

The protein belongs to the acetylglutamate kinase family. ArgB subfamily. Homodimer.

The protein resides in the cytoplasm. The enzyme catalyses N-acetyl-L-glutamate + ATP = N-acetyl-L-glutamyl 5-phosphate + ADP. It functions in the pathway amino-acid biosynthesis; L-arginine biosynthesis; N(2)-acetyl-L-ornithine from L-glutamate: step 2/4. Its function is as follows. Catalyzes the ATP-dependent phosphorylation of N-acetyl-L-glutamate. The sequence is that of Acetylglutamate kinase from Yersinia pestis bv. Antiqua (strain Antiqua).